Reading from the N-terminus, the 686-residue chain is Methionine--tRNA ligase (686 aa).

The short motif at 22–32 (PYANGPIHLGH) is the 'HIGH' region element. Zn(2+) contacts are provided by cysteine 153, cysteine 156, cysteine 166, and cysteine 169. Positions 337–341 (KMSKS) match the 'KMSKS' region motif. Lysine 340 is a binding site for ATP. The segment at 547 to 573 (MLEDSKESTPAPAAAKPKKAATQKADA) is disordered. Residues 584–686 (DFLKVKLRVA…SGAEPGMEVR (103 aa)) form the tRNA-binding domain.

Belongs to the class-I aminoacyl-tRNA synthetase family. MetG type 1 subfamily. Homodimer. Requires Zn(2+) as cofactor.

Its subcellular location is the cytoplasm. The catalysed reaction is tRNA(Met) + L-methionine + ATP = L-methionyl-tRNA(Met) + AMP + diphosphate. Its function is as follows. Is required not only for elongation of protein synthesis but also for the initiation of all mRNA translation through initiator tRNA(fMet) aminoacylation. The protein is Methionine--tRNA ligase of Alcanivorax borkumensis (strain ATCC 700651 / DSM 11573 / NCIMB 13689 / SK2).